The following is a 314-amino-acid chain: Peroxidase 2 (314 aa).

The signal sequence occupies residues M1 to A23. A Pyrrolidone carboxylic acid modification is found at Q24. Cystine bridges form between C34-C109, C67-C72, C115-C310, and C194-C219. H65 serves as the catalytic Proton acceptor. Ca(2+) is bound by residues D66, V69, G71, D73, and S75. The N-linked (GlcNAc...) asparagine glycan is linked to N148. P157 lines the substrate pocket. Residue N169 is glycosylated (N-linked (GlcNAc...) asparagine). H187 provides a ligand contact to heme b. A Ca(2+)-binding site is contributed by T188. N203 carries an N-linked (GlcNAc...) asparagine glycan. The Ca(2+) site is built by D234, T237, and D242. 2 N-linked (GlcNAc...) asparagine glycosylation sites follow: N274 and N309.

It belongs to the peroxidase family. Classical plant (class III) peroxidase subfamily. Ca(2+) is required as a cofactor. It depends on heme b as a cofactor.

The protein resides in the secreted. The enzyme catalyses 2 a phenolic donor + H2O2 = 2 a phenolic radical donor + 2 H2O. In terms of biological role, removal of H(2)O(2), oxidation of toxic reductants, biosynthesis and degradation of lignin, suberization, auxin catabolism, response to environmental stresses such as wounding, pathogen attack and oxidative stress. These functions might be dependent on each isozyme/isoform in each plant tissue. The protein is Peroxidase 2 (PRX112) of Oryza sativa subsp. indica (Rice).